A 483-amino-acid chain; its full sequence is Dual specificity protein phosphatase 10 (483 aa).

The 118-residue stretch at 169 to 286 (PSQGPVIIDC…FKQNHGNLCD (118 aa)) folds into the Rhodanese domain. Residues 200-216 (KISRRRLQQGKITVLDL) are interaction with MAP kinases. The Tyrosine-protein phosphatase domain occupies 322–465 (ELTPILPFLF…LLEFEEDLNN (144 aa)). Cys409 functions as the Phosphocysteine intermediate in the catalytic mechanism.

The protein belongs to the protein-tyrosine phosphatase family. Non-receptor class dual specificity subfamily. Monomer. Interacts with MAPK14.

It is found in the cytoplasm. The protein localises to the nucleus. It catalyses the reaction O-phospho-L-tyrosyl-[protein] + H2O = L-tyrosyl-[protein] + phosphate. The catalysed reaction is O-phospho-L-seryl-[protein] + H2O = L-seryl-[protein] + phosphate. The enzyme catalyses O-phospho-L-threonyl-[protein] + H2O = L-threonyl-[protein] + phosphate. Functionally, protein phosphatase involved in the inactivation of MAP kinases. Has a specificity for the MAPK11/MAPK12/MAPK13/MAPK14 subfamily. It preferably dephosphorylates p38. The sequence is that of Dual specificity protein phosphatase 10 (Dusp10) from Mus musculus (Mouse).